The sequence spans 379 residues: GDSL esterase/lipase At3g05180 (379 aa).

An N-terminal signal peptide occupies residues 1 to 27 (METLFHTLLRLLLFVAISHTLSPLAGS). Serine 43 (nucleophile) is an active-site residue. Asparagine 294 and asparagine 330 each carry an N-linked (GlcNAc...) asparagine glycan. Residues aspartate 349 and histidine 352 contribute to the active site.

Belongs to the 'GDSL' lipolytic enzyme family.

The protein resides in the secreted. The polypeptide is GDSL esterase/lipase At3g05180 (Arabidopsis thaliana (Mouse-ear cress)).